The chain runs to 327 residues: Annexin A8 (327 aa).

Annexin repeat units lie at residues F21 to Y92, P93 to Q164, G177 to K249, and N253 to G324. Ca(2+) is bound by residues M266, G268, G270, and D310.

It belongs to the annexin family.

This protein is an anticoagulant protein that acts as an indirect inhibitor of the thromboplastin-specific complex, which is involved in the blood coagulation cascade. The polypeptide is Annexin A8 (ANXA8) (Oryctolagus cuniculus (Rabbit)).